A 226-amino-acid polypeptide reads, in one-letter code: PKHD-type hydroxylase MADE_1018490 (226 aa).

The 101-residue stretch at 77-177 (RIFPPCFNRY…RIAAITWIQS (101 aa)) folds into the Fe2OG dioxygenase domain. 3 residues coordinate Fe cation: His95, Asp97, and His158. Arg168 is a binding site for 2-oxoglutarate.

Fe(2+) is required as a cofactor. It depends on L-ascorbate as a cofactor.

This Alteromonas mediterranea (strain DSM 17117 / CIP 110805 / LMG 28347 / Deep ecotype) protein is PKHD-type hydroxylase MADE_1018490.